The primary structure comprises 151 residues: Large ribosomal subunit protein bL9 (151 aa).

The protein belongs to the bacterial ribosomal protein bL9 family.

Binds to the 23S rRNA. In Prochlorococcus marinus (strain MIT 9312), this protein is Large ribosomal subunit protein bL9.